Reading from the N-terminus, the 264-residue chain is S-adenosylmethionine decarboxylase proenzyme (264 aa).

S112 functions as the Schiff-base intermediate with substrate; via pyruvic acid in the catalytic mechanism. Residue S112 is modified to Pyruvic acid (Ser); by autocatalysis. H117 (proton acceptor; for processing activity) is an active-site residue. Catalysis depends on C140, which acts as the Proton donor; for catalytic activity.

The protein belongs to the prokaryotic AdoMetDC family. Type 2 subfamily. Heterooctamer of four alpha and four beta chains arranged as a tetramer of alpha/beta heterodimers. Requires pyruvate as cofactor. Post-translationally, is synthesized initially as an inactive proenzyme. Formation of the active enzyme involves a self-maturation process in which the active site pyruvoyl group is generated from an internal serine residue via an autocatalytic post-translational modification. Two non-identical subunits are generated from the proenzyme in this reaction, and the pyruvate is formed at the N-terminus of the alpha chain, which is derived from the carboxyl end of the proenzyme. The post-translation cleavage follows an unusual pathway, termed non-hydrolytic serinolysis, in which the side chain hydroxyl group of the serine supplies its oxygen atom to form the C-terminus of the beta chain, while the remainder of the serine residue undergoes an oxidative deamination to produce ammonia and the pyruvoyl group blocking the N-terminus of the alpha chain.

It catalyses the reaction S-adenosyl-L-methionine + H(+) = S-adenosyl 3-(methylsulfanyl)propylamine + CO2. The protein operates within amine and polyamine biosynthesis; S-adenosylmethioninamine biosynthesis; S-adenosylmethioninamine from S-adenosyl-L-methionine: step 1/1. Functionally, catalyzes the decarboxylation of S-adenosylmethionine to S-adenosylmethioninamine (dcAdoMet), the propylamine donor required for the synthesis of the polyamines spermine and spermidine from the diamine putrescine. This chain is S-adenosylmethionine decarboxylase proenzyme, found in Shigella boydii serotype 4 (strain Sb227).